We begin with the raw amino-acid sequence, 1829 residues long: Iron-regulated protein FrpC (1829 aa).

Hemolysin-type calcium-binding repeat units follow at residues 869–886 (FGHN…NDTL), 887–904 (IGGA…SDTY), 1015–1032 (NGGL…DDLL), 1033–1050 (NGDA…NDTL), 1051–1068 (NGGE…NDAL), 1069–1086 (NGGE…NDTL), 1087–1104 (IGGA…SDTY), 1215–1232 (NGGL…DDLL), 1233–1250 (NGDA…NDTL), 1251–1268 (DGGE…NDAL), 1269–1286 (NGGE…NDTL), 1287–1304 (IGGA…SDTY), 1415–1432 (NGGL…DDLL), 1433–1450 (NGDA…NDTL), 1451–1468 (DGGE…NDAL), 1469–1486 (NGGE…NDTL), 1487–1504 (IGGA…SDTY), 1615–1632 (NGGL…DDLL), 1633–1650 (NGDA…NDTL), 1651–1668 (NGGE…NDVL), 1669–1686 (NGGE…NDTL), and 1687–1704 (IGGA…SDTY).

This sequence belongs to the RTX prokaryotic toxin (TC 1.C.11) family.

It is found in the cell outer membrane. The protein resides in the secreted. May participate in the pathogenesis of meningococcal disease. In Neisseria meningitidis serogroup C, this protein is Iron-regulated protein FrpC (frpC).